Here is a 271-residue protein sequence, read N- to C-terminus: Undecaprenyl-diphosphatase (271 aa).

Helical transmembrane passes span 2-22 (LLIL…FVPV), 42-62 (ANLF…VVYW), 80-100 (LRFW…GFSL), 108-128 (LFNP…MIIV), 149-168 (SIFV…SRSA), 175-195 (WIAG…AIPV), 214-234 (IEFI…LVVI), and 248-268 (IFAI…IFKI).

Belongs to the UppP family.

The protein localises to the cell membrane. It catalyses the reaction di-trans,octa-cis-undecaprenyl diphosphate + H2O = di-trans,octa-cis-undecaprenyl phosphate + phosphate + H(+). In terms of biological role, catalyzes the dephosphorylation of undecaprenyl diphosphate (UPP). Confers resistance to bacitracin. This chain is Undecaprenyl-diphosphatase, found in Clostridium tetani (strain Massachusetts / E88).